The following is a 427-amino-acid chain: MHLIDYLLLLLVGLLALSHGQLHVEHDGESCSNSSHQQILETGEGSPSLKIAPANADFAFRFYYLIASETPGKNIFFSPLSISAAYAMLSLGACSHSRSQILEGLGFNLTELSESDVHRGFQHLLHTLNLPGHGLETRVGSALFLSHNLKFLAKFLNDTMTFYEAKLFHTNFYDTVGTIQLINDHVKKETRGKIVDLVSELKKDVLMVLVNYIYFKALWEKPFISSRTTPKDFYVDENTTVRVPMMLQDQEHHWYLHDRYLPCSVLRMDYKGDTTVFFILPNQGKMGEIEEVLTPEMLMRWNNLLQKRNFYKKLELHFPKFSISGSYVLDQILPRLGFTDLFSKRADLSGITKQQKLEASKSFHKATLDVDEAGTEAAAATSFAIKFFSAQTNRHILRFNRPFLVVIFSTSTQSVLFLGKVVDPTKQ.

A signal peptide spans 1-20; the sequence is MHLIDYLLLLLVGLLALSHG. Asn33, Asn108, Asn157, and Asn238 each carry an N-linked (GlcNAc...) asparagine glycan.

This sequence belongs to the serpin family. In terms of assembly, monomer and some homodimers.

It localises to the secreted. Inhibits human amidolytic and kininogenase activities of tissue kallikrein. The polypeptide is Kallistatin (SERPINA4) (Pongo abelii (Sumatran orangutan)).